A 103-amino-acid chain; its full sequence is Nucleoid-associated protein Adeh_3636 (103 aa).

Belongs to the YbaB/EbfC family. As to quaternary structure, homodimer.

It is found in the cytoplasm. The protein localises to the nucleoid. Functionally, binds to DNA and alters its conformation. May be involved in regulation of gene expression, nucleoid organization and DNA protection. In Anaeromyxobacter dehalogenans (strain 2CP-C), this protein is Nucleoid-associated protein Adeh_3636.